The following is a 295-amino-acid chain: uncharacterized protein (295 aa).

Positions 1–58 (MESGDLRVFQMVAREGTITKAALQLGYVQSNVTARIQQLEAELGTTLFLRHNRGMTLS) constitute an HTH lysR-type domain. Residues 18-37 (ITKAALQLGYVQSNVTARIQ) constitute a DNA-binding region (H-T-H motif).

This sequence belongs to the LysR transcriptional regulatory family.

This is an uncharacterized protein from Bacillus subtilis (strain 168).